The sequence spans 319 residues: Cobalamin biosynthesis protein CbiB (319 aa).

5 consecutive transmembrane segments (helical) span residues 56–76, 82–102, 153–173, 204–224, and 296–316; these read VMWVVVVGATWGVAWGVLALA, WFGWSVEVWMIFTTLAGRSLA, VDGIIAPLFFLFLGGAPLAMA, VANYLPARLSWLLLGIAAGLC, and LMWVASTLALALFIAARCGLS.

This sequence belongs to the CobD/CbiB family.

The protein resides in the cell membrane. It functions in the pathway cofactor biosynthesis; adenosylcobalamin biosynthesis. Functionally, converts cobyric acid to cobinamide by the addition of aminopropanol on the F carboxylic group. However, the true cosubstrate could be (R)-1-amino-2-propanol O-2-phosphate, leading to cobinamide phosphate. The protein is Cobalamin biosynthesis protein CbiB of Salmonella paratyphi B (strain ATCC BAA-1250 / SPB7).